A 267-amino-acid chain; its full sequence is 3-deoxy-manno-octulosonate cytidylyltransferase 2 (267 aa).

This sequence belongs to the KdsB family.

It is found in the cytoplasm. The catalysed reaction is 3-deoxy-alpha-D-manno-oct-2-ulosonate + CTP = CMP-3-deoxy-beta-D-manno-octulosonate + diphosphate. It participates in nucleotide-sugar biosynthesis; CMP-3-deoxy-D-manno-octulosonate biosynthesis; CMP-3-deoxy-D-manno-octulosonate from 3-deoxy-D-manno-octulosonate and CTP: step 1/1. The protein operates within bacterial outer membrane biogenesis; lipopolysaccharide biosynthesis. In terms of biological role, activates KDO (a required 8-carbon sugar) for incorporation into bacterial lipopolysaccharide in Gram-negative bacteria. This is 3-deoxy-manno-octulosonate cytidylyltransferase 2 from Burkholderia ambifaria (strain MC40-6).